The following is a 187-amino-acid chain: UPF0301 protein YE3428 (187 aa).

Belongs to the UPF0301 (AlgH) family.

The protein is UPF0301 protein YE3428 of Yersinia enterocolitica serotype O:8 / biotype 1B (strain NCTC 13174 / 8081).